A 366-amino-acid polypeptide reads, in one-letter code: S-adenosylmethionine synthase 1 (366 aa).

Glu-18 is a binding site for K(+). Glu-31 and Gln-74 together coordinate L-methionine. Residues 142–144, 210–213, Asp-221, 227–228, Ala-244, Lys-248, and Lys-252 contribute to the ATP site; these read DGN, SGRF, and RK. Asp-221 lines the L-methionine pocket. Lys-252 contributes to the L-methionine binding site.

Belongs to the AdoMet synthase family. Homotetramer. The cofactor is Mn(2+). Mg(2+) is required as a cofactor. Co(2+) serves as cofactor. It depends on K(+) as a cofactor.

It is found in the cytoplasm. It carries out the reaction L-methionine + ATP + H2O = S-adenosyl-L-methionine + phosphate + diphosphate. It functions in the pathway amino-acid biosynthesis; S-adenosyl-L-methionine biosynthesis; S-adenosyl-L-methionine from L-methionine: step 1/1. Catalyzes the formation of S-adenosylmethionine from methionine and ATP. The reaction comprises two steps that are both catalyzed by the same enzyme: formation of S-adenosylmethionine (AdoMet) and triphosphate, and subsequent hydrolysis of the triphosphate. This chain is S-adenosylmethionine synthase 1 (SAMS1), found in Pisum sativum (Garden pea).